A 245-amino-acid polypeptide reads, in one-letter code: MDKNELVQKAKLAEQAERYDDMAACMKSVTEQGAELSNEERNLLSVAYKNVVGARRSSWRVVSSIEQKTEGAEKKQQMAREYREKIETELRDICNDVLSLLEKFLIPNASQPESKVFYLKMKGDYYRYLAEVAAGDDKKGIVDQSQQAYQEAFEISKKEMQPTHPIRLGLALNFSVFYYEILNSPEKACSLAKTAFDEAIAELDTLSEESYKDSTLIMQLLRDNLTLWTSDTQGDEAEAGEGGEN.

At M1 the chain carries N-acetylmethionine. Position 3 is an N6-acetyllysine (K3). Phosphoserine; by PKA is present on S58. K68 bears the N6-acetyllysine mark. A phosphoserine mark is found at S184, S207, and S210. T232 bears the Phosphothreonine; by CK1 mark.

Belongs to the 14-3-3 family. In terms of assembly, homodimer. Heterodimerizes with YWHAE. Homo- and heterodimerization is inhibited by phosphorylation on Ser-58. Interacts with FOXO4, NOXA1, SSH1 and ARHGEF2. Interacts with CDK16 and with WEE1 (C-terminal). Interacts with MLF1 (phosphorylated form); the interaction retains it in the cytoplasm. Interacts with BSPRY. Interacts with Thr-phosphorylated ITGB2. Interacts with Pseudomonas aeruginosa exoS (unphosphorylated form). Interacts with BAX; the interaction occurs in the cytoplasm. Under stress conditions, MAPK8-mediated phosphorylation releases BAX to mitochondria. Interacts with phosphorylated RAF1; the interaction is inhibited when YWHAZ is phosphorylated on Thr-232. Interacts with TP53; the interaction enhances p53 transcriptional activity. The Ser-58 phosphorylated form inhibits this interaction and p53 transcriptional activity. Interacts with ABL1 (phosphorylated form); the interaction retains ABL1 in the cytoplasm. Interacts with PKA-phosphorylated AANAT; the interaction modulates AANAT enzymatic activity by increasing affinity for arylalkylamines and acetyl-CoA and protecting the enzyme from dephosphorylation and proteasomal degradation. It may also prevent thiol-dependent inactivation. Interacts with AKT1; the interaction phosphorylates YWHAZ and modulates dimerization. Interacts with GAB2. Interacts with SAMSN1. Interacts with BCL2L11 and TLK2. Interacts with the 'Thr-369' phosphorylated form of DAPK2. Interacts with PI4KB, TBC1D22A and TBC1D22B. Interacts with ZFP36L1 (via phosphorylated form); this interaction occurs in a p38 MAPK- and AKT-signaling pathways. Interacts with SLITRK1. Interacts with AK5, LDB1, MADD, PDE1A and SMARCB1. Interacts with ARHGEF7 and GIT1. Interacts with MEFV. Interacts with ADAM22 (via C-terminus). Post-translationally, the delta, brain-specific form differs from the zeta form in being phosphorylated. Phosphorylation on Ser-184 by MAPK8; promotes dissociation of BAX and translocation of BAX to mitochondria. Phosphorylation on Thr-232; inhibits binding of RAF1. Phosphorylated on Ser-58 by PKA and protein kinase C delta type catalytic subunit in a sphingosine-dependent fashion. Phosphorylation on Ser-58 by PKA; disrupts homodimerization and heterodimerization with YHAE and TP53.

It localises to the cytoplasm. The protein localises to the melanosome. Its function is as follows. Adapter protein implicated in the regulation of a large spectrum of both general and specialized signaling pathways. Binds to a large number of partners, usually by recognition of a phosphoserine or phosphothreonine motif. Binding generally results in the modulation of the activity of the binding partner. Promotes cytosolic retention and inactivation of TFEB transcription factor by binding to phosphorylated TFEB. Induces ARHGEF7 activity on RAC1 as well as lamellipodia and membrane ruffle formation. In neurons, regulates spine maturation through the modulation of ARHGEF7 activity. This chain is 14-3-3 protein zeta/delta (Ywhaz), found in Mus musculus (Mouse).